The primary structure comprises 299 residues: Methionyl-tRNA formyltransferase (299 aa).

109 to 112 contributes to the (6S)-5,6,7,8-tetrahydrofolate binding site; the sequence is SLLP.

The protein belongs to the Fmt family.

It carries out the reaction L-methionyl-tRNA(fMet) + (6R)-10-formyltetrahydrofolate = N-formyl-L-methionyl-tRNA(fMet) + (6S)-5,6,7,8-tetrahydrofolate + H(+). Its function is as follows. Attaches a formyl group to the free amino group of methionyl-tRNA(fMet). The formyl group appears to play a dual role in the initiator identity of N-formylmethionyl-tRNA by promoting its recognition by IF2 and preventing the misappropriation of this tRNA by the elongation apparatus. The sequence is that of Methionyl-tRNA formyltransferase from Wolbachia sp. subsp. Drosophila simulans (strain wRi).